We begin with the raw amino-acid sequence, 530 residues long: Tryptophan 7-halogenase RebH (530 aa).

The FAD site is built by Gly13, Thr15, Ala16, Ala39, Asp41, Glu49, and Ala50. Lys79 is an active-site residue. Positions 197 and 348 each coordinate FAD. An L-tryptophan-binding site is contributed by Glu357. Residues Thr359 and Gly360 each coordinate chloride. Ile361 lines the FAD pocket. 4 residues coordinate L-tryptophan: Tyr454, Tyr455, Glu461, and Phe465.

Belongs to the flavin-dependent halogenase family. Bacterial tryptophan halogenase subfamily. As to quaternary structure, homodimer.

It catalyses the reaction L-tryptophan + FADH2 + chloride + O2 = 7-chloro-L-tryptophan + FAD + 2 H2O. Functionally, involved in the biosynthesis of the indolocarbazole antitumor agent rebeccamycin. Catalyzes the chlorination of tryptophan (Trp) at C7 position to yield 7-chlorotryptophan. It is also able to use bromide ions to generate monobrominated Trp. This Lentzea aerocolonigenes (Lechevalieria aerocolonigenes) protein is Tryptophan 7-halogenase RebH (rebH).